The primary structure comprises 405 residues: Adenylosuccinate synthetase (405 aa).

GTP-binding positions include 12 to 18 (GDEGKGK) and 40 to 42 (GHT). Asp13 serves as the catalytic Proton acceptor. Asp13 and Gly40 together coordinate Mg(2+). Residues 13–16 (DEGK), 38–41 (NAGH), Thr121, Arg135, Gln213, Thr228, and Arg297 each bind IMP. The active-site Proton donor is the His41. Position 293-299 (293-299 (TTTGRPR)) interacts with substrate. GTP-binding positions include Arg299, 325 to 327 (KMD), and 390 to 392 (SAG).

The protein belongs to the adenylosuccinate synthetase family. As to quaternary structure, homodimer. Requires Mg(2+) as cofactor.

The protein localises to the cytoplasm. The enzyme catalyses IMP + L-aspartate + GTP = N(6)-(1,2-dicarboxyethyl)-AMP + GDP + phosphate + 2 H(+). The protein operates within purine metabolism; AMP biosynthesis via de novo pathway; AMP from IMP: step 1/2. In terms of biological role, plays an important role in the de novo pathway of purine nucleotide biosynthesis. Catalyzes the first committed step in the biosynthesis of AMP from IMP. The sequence is that of Adenylosuccinate synthetase from Deinococcus radiodurans (strain ATCC 13939 / DSM 20539 / JCM 16871 / CCUG 27074 / LMG 4051 / NBRC 15346 / NCIMB 9279 / VKM B-1422 / R1).